Reading from the N-terminus, the 115-residue chain is Probable non-functional immunoglobulin heavy variable 8-51-1 (115 aa).

Positions methionine 1–glycine 17 are cleaved as a signal peptide. Residues glutamate 18–serine 42 are framework-1. The region spanning alanine 19 to glycine 115 is the Ig-like domain. The interval tryptophan 43–glutamate 50 is complementarity-determining-1. A framework-2 region spans residues isoleucine 51–valine 67. Residues cysteine 55 and cysteine 113 are joined by a disulfide bond. Residues isoleucine 68–glutamine 75 form a complementarity-determining-2 region. Residues tyrosine 76 to cysteine 113 form a framework-3 region. The interval alanine 114–glycine 115 is complementarity-determining-3.

In terms of assembly, immunoglobulins are composed of two identical heavy chains and two identical light chains; disulfide-linked.

The protein localises to the secreted. The protein resides in the cell membrane. In terms of biological role, probable non-functional open reading frame (ORF) of V region of the variable domain of immunoglobulin heavy chains. Non-functional ORF generally cannot participate in the synthesis of a productive immunoglobulin chain due to altered V-(D)-J or switch recombination and/or splicing site (at mRNA level) and/or conserved amino acid change (protein level). Immunoglobulins, also known as antibodies, are membrane-bound or secreted glycoproteins produced by B lymphocytes. In the recognition phase of humoral immunity, the membrane-bound immunoglobulins serve as receptors which, upon binding of a specific antigen, trigger the clonal expansion and differentiation of B lymphocytes into immunoglobulins-secreting plasma cells. Secreted immunoglobulins mediate the effector phase of humoral immunity, which results in the elimination of bound antigens. The antigen binding site is formed by the variable domain of one heavy chain, together with that of its associated light chain. Thus, each immunoglobulin has two antigen binding sites with remarkable affinity for a particular antigen. The variable domains are assembled by a process called V-(D)-J rearrangement and can then be subjected to somatic hypermutations which, after exposure to antigen and selection, allow affinity maturation for a particular antigen. The protein is Probable non-functional immunoglobulin heavy variable 8-51-1 of Homo sapiens (Human).